The sequence spans 358 residues: Protein-arginine kinase (358 aa).

The Phosphagen kinase C-terminal domain maps to 23 to 250; sequence VWPVTTFSLA…SKLSVAEVAA (228 aa). ATP is bound by residues 26 to 30, 174 to 178, and 203 to 208; these read VTTFS, KSQCF, and SSLLLG.

It belongs to the ATP:guanido phosphotransferase family.

It carries out the reaction L-arginyl-[protein] + ATP = N(omega)-phospho-L-arginyl-[protein] + ADP + H(+). In terms of biological role, catalyzes the specific phosphorylation of arginine residues in proteins. The protein is Protein-arginine kinase of Chlamydia pneumoniae (Chlamydophila pneumoniae).